The sequence spans 133 residues: S-protein homolog 21 (133 aa).

The N-terminal stretch at 1–21 (MKNLSIFLFVVGLCMISDVYG) is a signal peptide.

This sequence belongs to the plant self-incompatibility (S1) protein family.

The protein localises to the secreted. This chain is S-protein homolog 21, found in Arabidopsis thaliana (Mouse-ear cress).